Here is a 351-residue protein sequence, read N- to C-terminus: sn-glycerol-3-phosphate import ATP-binding protein UgpC (351 aa).

In terms of domain architecture, ABC transporter spans 4–234 (ITLDNLVKAY…PATTFVAGFI (231 aa)). An ATP-binding site is contributed by 36–43 (GPSGCGKS).

Belongs to the ABC transporter superfamily. sn-glycerol-3-phosphate importer (TC 3.A.1.1.3) family. As to quaternary structure, the complex is composed of two ATP-binding proteins (UgpC), two transmembrane proteins (UgpA and UgpE) and a solute-binding protein (UgpB).

Its subcellular location is the cell inner membrane. It catalyses the reaction sn-glycerol 3-phosphate(out) + ATP + H2O = sn-glycerol 3-phosphate(in) + ADP + phosphate + H(+). Part of the ABC transporter complex UgpBAEC involved in sn-glycerol-3-phosphate (G3P) import. Responsible for energy coupling to the transport system. The sequence is that of sn-glycerol-3-phosphate import ATP-binding protein UgpC from Ruegeria pomeroyi (strain ATCC 700808 / DSM 15171 / DSS-3) (Silicibacter pomeroyi).